Reading from the N-terminus, the 140-residue chain is Zinc finger SWIM domain-containing protein 7 (140 aa).

Residues 66–114 form an SWIM-type zinc finger; that stretch reads YQVLGSSSKTYTCLASCHYCSCPAFAFSVLRKSDSILCKHLLAVYLSQV.

This sequence belongs to the SWS1 family. In terms of assembly, interacts with RAD51D and XRCC3; involved in homologous recombination repair. Interacts with SWSAP1; they form a functional complex involved in homologous recombination repair and stabilize each other. In terms of tissue distribution, expressed in ovary and testis.

Its subcellular location is the nucleus. Involved in early stages of the homologous recombination repair (HRR) pathway of double-stranded DNA breaks arising during DNA replication or induced by DNA-damaging agents. Required for meiotic progression, hence for fertility. This Homo sapiens (Human) protein is Zinc finger SWIM domain-containing protein 7 (ZSWIM7).